A 159-amino-acid polypeptide reads, in one-letter code: Nucleotide-binding protein PSPPH_4093 (159 aa).

Belongs to the YajQ family.

In terms of biological role, nucleotide-binding protein. This is Nucleotide-binding protein PSPPH_4093 from Pseudomonas savastanoi pv. phaseolicola (strain 1448A / Race 6) (Pseudomonas syringae pv. phaseolicola (strain 1448A / Race 6)).